A 460-amino-acid chain; its full sequence is Bifunctional protein GlmU (460 aa).

Residues 1-235 form a pyrophosphorylase region; the sequence is MALSAAIILA…PLSVEGVNDR (235 aa). UDP-N-acetyl-alpha-D-glucosamine-binding positions include 9–12, lysine 23, glutamine 76, and 81–82; these read LAAG and GT. Residue aspartate 109 coordinates Mg(2+). Positions 146, 161, 176, and 233 each coordinate UDP-N-acetyl-alpha-D-glucosamine. Asparagine 233 contributes to the Mg(2+) binding site. Positions 236–256 are linker; the sequence is VQLAALAKAHNKRVCEHWMRE. The N-acetyltransferase stretch occupies residues 257 to 460; sequence GVTILDPDTT…VEGWKPEWER (204 aa). UDP-N-acetyl-alpha-D-glucosamine is bound by residues arginine 338 and lysine 356. Histidine 368 (proton acceptor) is an active-site residue. UDP-N-acetyl-alpha-D-glucosamine contacts are provided by tyrosine 371 and asparagine 382. Acetyl-CoA is bound by residues 391–392 and alanine 428; that span reads NY.

In the N-terminal section; belongs to the N-acetylglucosamine-1-phosphate uridyltransferase family. The protein in the C-terminal section; belongs to the transferase hexapeptide repeat family. As to quaternary structure, homotrimer. Requires Mg(2+) as cofactor.

It is found in the cytoplasm. It carries out the reaction alpha-D-glucosamine 1-phosphate + acetyl-CoA = N-acetyl-alpha-D-glucosamine 1-phosphate + CoA + H(+). It catalyses the reaction N-acetyl-alpha-D-glucosamine 1-phosphate + UTP + H(+) = UDP-N-acetyl-alpha-D-glucosamine + diphosphate. It functions in the pathway nucleotide-sugar biosynthesis; UDP-N-acetyl-alpha-D-glucosamine biosynthesis; N-acetyl-alpha-D-glucosamine 1-phosphate from alpha-D-glucosamine 6-phosphate (route II): step 2/2. It participates in nucleotide-sugar biosynthesis; UDP-N-acetyl-alpha-D-glucosamine biosynthesis; UDP-N-acetyl-alpha-D-glucosamine from N-acetyl-alpha-D-glucosamine 1-phosphate: step 1/1. Its pathway is bacterial outer membrane biogenesis; LPS lipid A biosynthesis. Functionally, catalyzes the last two sequential reactions in the de novo biosynthetic pathway for UDP-N-acetylglucosamine (UDP-GlcNAc). The C-terminal domain catalyzes the transfer of acetyl group from acetyl coenzyme A to glucosamine-1-phosphate (GlcN-1-P) to produce N-acetylglucosamine-1-phosphate (GlcNAc-1-P), which is converted into UDP-GlcNAc by the transfer of uridine 5-monophosphate (from uridine 5-triphosphate), a reaction catalyzed by the N-terminal domain. This chain is Bifunctional protein GlmU, found in Bifidobacterium adolescentis (strain ATCC 15703 / DSM 20083 / NCTC 11814 / E194a).